The sequence spans 449 residues: D-inositol 3-phosphate glycosyltransferase (449 aa).

A 1D-myo-inositol 3-phosphate-binding site is contributed by histidine 43. Residues 49-50 (QP) and glycine 57 contribute to the UDP-N-acetyl-alpha-D-glucosamine site. 1D-myo-inositol 3-phosphate contacts are provided by residues 54-59 (DAGGMN), lysine 112, tyrosine 145, threonine 169, and arginine 189. UDP-N-acetyl-alpha-D-glucosamine is bound by residues arginine 263, lysine 268, and glutamine 324. 3 residues coordinate Mg(2+): tyrosine 333, arginine 334, and alanine 336. UDP-N-acetyl-alpha-D-glucosamine-binding residues include glutamate 346 and glutamate 354. Threonine 360 serves as a coordination point for Mg(2+).

The protein belongs to the glycosyltransferase group 1 family. MshA subfamily. In terms of assembly, homodimer.

It catalyses the reaction 1D-myo-inositol 3-phosphate + UDP-N-acetyl-alpha-D-glucosamine = 1D-myo-inositol 2-acetamido-2-deoxy-alpha-D-glucopyranoside 3-phosphate + UDP + H(+). Functionally, catalyzes the transfer of a N-acetyl-glucosamine moiety to 1D-myo-inositol 3-phosphate to produce 1D-myo-inositol 2-acetamido-2-deoxy-glucopyranoside 3-phosphate in the mycothiol biosynthesis pathway. The sequence is that of D-inositol 3-phosphate glycosyltransferase from Segniliparus rotundus (strain ATCC BAA-972 / CDC 1076 / CIP 108378 / DSM 44985 / JCM 13578).